Reading from the N-terminus, the 168-residue chain is Nucleoside deoxyribosyltransferase (168 aa).

Glu-103 functions as the Nucleophile in the catalytic mechanism.

It belongs to the nucleoside deoxyribosyltransferase family.

It catalyses the reaction 2-deoxy-D-ribosyl-base(1) + base(2) = 2-deoxy-D-ribosyl-base(2) + base(1).. The protein operates within nucleotide metabolism; nucleotide salvage pathway. Its function is as follows. Catalyzes the cleavage of the glycosidic bond of 2'-deoxyribonucleosides and the transfer of the deoxyribosyl moiety to an acceptor purine or pyrimidine base. The sequence is that of Nucleoside deoxyribosyltransferase (ntd) from Limosilactobacillus fermentum (Lactobacillus fermentum).